Reading from the N-terminus, the 318-residue chain is tRNA U34 carboxymethyltransferase (318 aa).

Carboxy-S-adenosyl-L-methionine contacts are provided by Lys-88, Trp-102, Lys-107, Gly-126, Met-192, Tyr-196, and Arg-311.

The protein belongs to the class I-like SAM-binding methyltransferase superfamily. CmoB family. In terms of assembly, homotetramer.

It catalyses the reaction carboxy-S-adenosyl-L-methionine + 5-hydroxyuridine(34) in tRNA = 5-carboxymethoxyuridine(34) in tRNA + S-adenosyl-L-homocysteine + H(+). Catalyzes carboxymethyl transfer from carboxy-S-adenosyl-L-methionine (Cx-SAM) to 5-hydroxyuridine (ho5U) to form 5-carboxymethoxyuridine (cmo5U) at position 34 in tRNAs. In Pseudomonas fluorescens (strain ATCC BAA-477 / NRRL B-23932 / Pf-5), this protein is tRNA U34 carboxymethyltransferase.